Here is a 364-residue protein sequence, read N- to C-terminus: Molybdenum import ATP-binding protein ModC (364 aa).

The ABC transporter domain maps to 1-229 (MLLIDIKKQL…PLMRPWLNAS (229 aa)). 31–38 (GRSGAGKS) lines the ATP pocket. In terms of domain architecture, Mop spans 293 to 360 (HSSIRNILPV…IKGVSVTQSD (68 aa)).

This sequence belongs to the ABC transporter superfamily. Molybdate importer (TC 3.A.1.8) family. In terms of assembly, the complex is composed of two ATP-binding proteins (ModC), two transmembrane proteins (ModB) and a solute-binding protein (ModA).

The protein resides in the cell inner membrane. The enzyme catalyses molybdate(out) + ATP + H2O = molybdate(in) + ADP + phosphate + H(+). In terms of biological role, part of the ABC transporter complex ModABC involved in molybdenum import. Responsible for energy coupling to the transport system. The polypeptide is Molybdenum import ATP-binding protein ModC (Aliivibrio fischeri (strain ATCC 700601 / ES114) (Vibrio fischeri)).